A 578-amino-acid chain; its full sequence is Proline--tRNA ligase (578 aa).

Belongs to the class-II aminoacyl-tRNA synthetase family. ProS type 1 subfamily. In terms of assembly, homodimer.

It is found in the cytoplasm. It catalyses the reaction tRNA(Pro) + L-proline + ATP = L-prolyl-tRNA(Pro) + AMP + diphosphate. Its function is as follows. Catalyzes the attachment of proline to tRNA(Pro) in a two-step reaction: proline is first activated by ATP to form Pro-AMP and then transferred to the acceptor end of tRNA(Pro). As ProRS can inadvertently accommodate and process non-cognate amino acids such as alanine and cysteine, to avoid such errors it has two additional distinct editing activities against alanine. One activity is designated as 'pretransfer' editing and involves the tRNA(Pro)-independent hydrolysis of activated Ala-AMP. The other activity is designated 'posttransfer' editing and involves deacylation of mischarged Ala-tRNA(Pro). The misacylated Cys-tRNA(Pro) is not edited by ProRS. In Burkholderia mallei (strain ATCC 23344), this protein is Proline--tRNA ligase.